A 216-amino-acid chain; its full sequence is GTP cyclohydrolase 1 (216 aa).

Zn(2+)-binding residues include C108, H111, and C179.

It belongs to the GTP cyclohydrolase I family. As to quaternary structure, toroid-shaped homodecamer, composed of two pentamers of five dimers.

It catalyses the reaction GTP + H2O = 7,8-dihydroneopterin 3'-triphosphate + formate + H(+). It functions in the pathway cofactor biosynthesis; 7,8-dihydroneopterin triphosphate biosynthesis; 7,8-dihydroneopterin triphosphate from GTP: step 1/1. The polypeptide is GTP cyclohydrolase 1 (Shewanella sp. (strain ANA-3)).